The primary structure comprises 268 residues: ELL-associated factor 1 (268 aa).

The tract at residues 106–268 is disordered; sequence IQVKKTRAEG…LSESGSDSDD (163 aa). The span at 128-154 shows a compositional bias: pro residues; it reads TRPPQTSQPPPPPPPMPFRAPTKPPVG. Ser-165 carries the phosphoserine modification. The segment covering 171 to 181 has biased composition (basic and acidic residues); sequence DDIKRELRAEV. The tract at residues 182–262 is necessary for transactivation activity; the sequence is DIIEQMSSSS…LRNDLQLSES (81 aa). The span at 188–213 shows a compositional bias: low complexity; sequence SSSSGSSSSDSESSSGSDDDSSSSGG. The span at 238 to 268 shows a compositional bias: polar residues; the sequence is NGTSRPQGSNQLMNTLRNDLQLSESGSDSDD.

It belongs to the EAF family. In terms of assembly, component of the super elongation complex (SEC), at least composed of EAF1, EAF2, CDK9, MLLT3/AF9, AFF (AFF1 or AFF4), the P-TEFb complex and ELL (ELL, ELL2 or ELL3). Interacts with ELL and ELL2. As to expression, strongly expressed in heart, brain, placenta, lung, liver, skeletal muscle, kidney, pancreas, spleen, prostate, testis, small intestine and colon. Poorly expressed in thymus.

It localises to the nucleus speckle. The protein resides in the nucleus. It is found in the cajal body. Its function is as follows. Acts as a transcriptional transactivator of ELL and ELL2 elongation activities. The chain is ELL-associated factor 1 (EAF1) from Homo sapiens (Human).